Here is a 699-residue protein sequence, read N- to C-terminus: MSASASVGGPVPQPPPGPAAALPPGSAARALHVELPSQQRRLRHLRNIAARNIVNRNGHQLLDTYFTLHLCSTEKIYKEFYRSEVIKNSLNPTWRSLDFGIMPDRLDTSVSCFVVKIWGGKENIYQLLIEWKVCLDGLKYLGQQIHARNQNEIIFGLNDGYYGAPFEHKGYSNAQKTILLQVDQNCVRNSYDVFSLLRLHRAQCAIKQTQVTVQKIGKEIEEKLRLTSTSNELKKKSECLQLKILVLQNELERQKKALGREVALLHKQQIALQDKGSAFSAEHLKLQLQKESLNELRKECTAKRELFLKTNAQLTIRCRQLLSELSYIYPIDLNEHKDYFVCGVKLPNSEDFQAKDDGSIAVALGYTAHLVSMISFFLQVPLRYPIIHKGSRSTIKDNINDKLTEKEREFPLYPKGGEKLQFDYGVYLLNKNIAQLRYQHGLGTPDLRQTLPNLKNFMEHGLMVRCDRHHTSSAIPVPKRQSSIFGGADVGFSGGIPSPDKGHRKRASSENERLQYKTPPPSYNSALAQPVTTVPSMGETERKITSLSSSLDTSLDFSKENKKKGEDLVGSLNGGHANVHPSQEQGEALSGHRATVNGTLLPSEQAGSASVQLPGEFHPVSEAELCCTVEQAEEIIGLEATGFASGDQLEAFNCIPVDSAVAVECDEQVLGEFEEFSRRIYALNENVSSFRRPRRSSDK.

Over residues 1–10 the composition is skewed to low complexity; the sequence is MSASASVGGP. Residues 1-24 are disordered; it reads MSASASVGGPVPQPPPGPAAALPP. The C2 domain occupies 23–149; sequence PPGSAARALH…YLGQQIHARN (127 aa). The segment at 200–269 is sufficient for interaction with STX7; VTI1B AND STX8; the sequence is HRAQCAIKQT…REVALLHKQQ (70 aa). Residues 224–305 are a coiled coil; sequence LRLTSTSNEL…LRKECTAKRE (82 aa). The sufficient for interaction with VPS16, required for interaction with CEP63 stretch occupies residues 270-442; that stretch reads IALQDKGSAF…IAQLRYQHGL (173 aa). Residues 443–699 are required for interaction with PRKDC, XRCC6 and XRCC5; the sequence is GTPDLRQTLP…FRRPRRSSDK (257 aa). Positions 486–591 are disordered; that stretch reads GGADVGFSGG…SQEQGEALSG (106 aa). At serine 493 the chain carries Phosphoserine. Serine 498 bears the Phosphoserine; by MTOR mark. At serine 508 the chain carries Phosphoserine. Threonine 518 carries the phosphothreonine modification. Serine 522 carries the phosphoserine modification. Polar residues predominate over residues 523–535; sequence YNSALAQPVTTVP. A compositionally biased stretch (low complexity) spans 545–556; the sequence is TSLSSSLDTSLD. 2 positions are modified to phosphoserine: serine 549 and serine 550. A compositionally biased stretch (basic and acidic residues) spans 557-567; the sequence is FSKENKKKGED. 3 positions are modified to phosphoserine: serine 571, serine 582, and serine 689.

As to quaternary structure, component of the PI3K (PI3KC3/PI3K-III/class III phosphatidylinositol 3-kinase) complex II (PI3KC3-C2) in which the core composed of the catalytic subunit PIK3C3, the regulatory subunit PIK3R4 and BECN1 is associated with UVRAG; in the complex interacts directly with BECN1. PI3KC3-C2 can associate with further regulatory subunits such as RUBCN and probably SH3GLB1/Bif-1. Interacts with SH3GLB1; UVRAG bridges the interaction to BECN1 indicative for an association with the PI3K complex PI3KC3-C2. Interacts with RINT1. Associates with the NRZ complex under basal conditions and dissociates from it under autophagy conditions to associate with the PI3K complex; these complex associations seem to be mutually exclusive. Interacts with VPS16; VPS11; VPS18; VPS33 (VPS33A or VPS33B) and VPS39; indicative for an association with a class C Vps tethering complex (possibly the HOPS complex). Interacts with RAB7A; RAB7A competes with UVRAG for RUBCN binding. Interacts with STX7, VTI1B, STX8. Interacts with PRKDC, XRCC6 and XRCC5; indicative for an association with the DNA-dependent protein kinase complex DNA-PK. Interacts with CEP63. Directly interacts with FEZ1 and SCOC; the interaction with SCOC is reduced by amino acid starvation, but the complex is stabilized in the presence of FEZ1. Interacts with BECN1P1/BECN2. Interacts with SLAMF1. Interacts with RUBCNL/PACER; promoting targeting of UVRAG to autophagosome. Interacts with WNK1. In terms of processing, phosphorylated at Ser-498 by MTOR under basal conditions; increases the interaction with RUBCN implicated in inhibitory effect of RUBCN on PI3KC3 and decreases interaction with RAB7,A and VPS16 and VPS39 (indicative for a class C Vps complex, possibly the HOPS complex). In terms of tissue distribution, highly expressed in brain, lung, kidney and liver.

The protein localises to the late endosome. It is found in the lysosome. Its subcellular location is the cytoplasmic vesicle. It localises to the autophagosome. The protein resides in the early endosome. The protein localises to the endoplasmic reticulum. It is found in the midbody. Its subcellular location is the chromosome. It localises to the centromere. Versatile protein that is involved in regulation of different cellular pathways implicated in membrane trafficking. Involved in regulation of the COPI-dependent retrograde transport from Golgi and the endoplasmic reticulum by associating with the NRZ complex; the function is dependent on its binding to phosphatidylinositol 3-phosphate (PtdIns(3)P). During autophagy acts as a regulatory subunit of the alternative PI3K complex II (PI3KC3-C2) that mediates formation of phosphatidylinositol 3-phosphate and is believed to be involved in maturation of autophagosomes and endocytosis. Activates lipid kinase activity of PIK3C3. Involved in the regulation of degradative endocytic trafficking and cytokinesis, and in regulation of ATG9A transport from the Golgi to the autophagosome; the functions seems to implicate its association with PI3KC3-C2. Involved in maturation of autophagosomes and degradative endocytic trafficking independently of BECN1 but depending on its association with a class C Vps complex (possibly the HOPS complex); the association is also proposed to promote autophagosome recruitment and activation of Rab7 and endosome-endosome fusion events. Enhances class C Vps complex (possibly HOPS complex) association with a SNARE complex and promotes fusogenic SNARE complex formation during late endocytic membrane fusion. In case of negative-strand RNA virus infection is required for efficient virus entry, promotes endocytic transport of virions and is implicated in a VAMP8-specific fusogenic SNARE complex assembly. Functionally, involved in maintaining chromosomal stability. Promotes DNA double-strand break (DSB) repair by association with DNA-dependent protein kinase complex DNA-PK and activating it in non-homologous end joining (NHEJ). Required for centrosome stability and proper chromosome segregation. The polypeptide is UV radiation resistance-associated gene protein (UVRAG) (Homo sapiens (Human)).